Here is a 291-residue protein sequence, read N- to C-terminus: 4-hydroxy-tetrahydrodipicolinate synthase (291 aa).

Thr44 lines the pyruvate pocket. Tyr132 (proton donor/acceptor) is an active-site residue. The Schiff-base intermediate with substrate role is filled by Lys160. Val202 contributes to the pyruvate binding site.

Belongs to the DapA family. In terms of assembly, homotetramer; dimer of dimers.

It localises to the cytoplasm. It carries out the reaction L-aspartate 4-semialdehyde + pyruvate = (2S,4S)-4-hydroxy-2,3,4,5-tetrahydrodipicolinate + H2O + H(+). Its pathway is amino-acid biosynthesis; L-lysine biosynthesis via DAP pathway; (S)-tetrahydrodipicolinate from L-aspartate: step 3/4. Catalyzes the condensation of (S)-aspartate-beta-semialdehyde [(S)-ASA] and pyruvate to 4-hydroxy-tetrahydrodipicolinate (HTPA). In Clostridium perfringens (strain 13 / Type A), this protein is 4-hydroxy-tetrahydrodipicolinate synthase.